We begin with the raw amino-acid sequence, 97 residues long: MELKSGLSILLCFGICIAVINAGCFEDWSRCSPSTSRGTGVLWRDCDSYCKVCFKADRGECFDSPSLNCPQRLPNNKQCRCINARTAKDNRNPTCWA.

The signal sequence occupies residues 1–22 (MELKSGLSILLCFGICIAVINA). 5 cysteine pairs are disulfide-bonded: cysteine 24–cysteine 31, cysteine 46–cysteine 50, cysteine 53–cysteine 95, cysteine 61–cysteine 69, and cysteine 79–cysteine 81.

As to expression, coelomic liquid (at protein level). Expressed in large fat cells in contact with coelomic cavities, in intestinal epithelia and at the epidermis level.

Its subcellular location is the secreted. Functionally, has a bactericidal activity. Active against M.luteus. No activity toward E.coli and F.oxysporum. In Theromyzon tessulatum (Duck leech), this protein is Theromacin.